The sequence spans 360 residues: Ferredoxin--NADP reductase, leaf isozyme, chloroplastic (360 aa).

The N-terminal 52 residues, 1 to 52, are a transit peptide targeting the chloroplast; it reads MAAAVTAAVSLPYSNSTSLPIRTSIVAPERLVFKKVSLNNVSISGRVGTIRA. In terms of domain architecture, FAD-binding FR-type spans 81-203; the sequence is KEPYVGRCLL…TGPVGKEMLM (123 aa). FAD is bound by residues 139 to 142, 160 to 162, Y166, 177 to 179, and T218; these read RLYS, CVK, and VCS. Residues S142 and K162 each contribute to the NADP(+) site. Residues T218, 250 to 251, 280 to 281, K290, 319 to 320, and E358 contribute to the NADP(+) site; these read VP, SR, and GL.

This sequence belongs to the ferredoxin--NADP reductase type 1 family. In terms of assembly, monomer. Interacts with TIC62 (via C-terminus). FAD is required as a cofactor.

It is found in the plastid. The protein resides in the chloroplast stroma. Its subcellular location is the chloroplast thylakoid membrane. The enzyme catalyses 2 reduced [2Fe-2S]-[ferredoxin] + NADP(+) + H(+) = 2 oxidized [2Fe-2S]-[ferredoxin] + NADPH. It functions in the pathway energy metabolism; photosynthesis. Its function is as follows. May play a key role in regulating the relative amounts of cyclic and non-cyclic electron flow to meet the demands of the plant for ATP and reducing power. This chain is Ferredoxin--NADP reductase, leaf isozyme, chloroplastic (PETH), found in Pisum sativum (Garden pea).